Reading from the N-terminus, the 124-residue chain is Small ribosomal subunit protein uS12 (124 aa).

Residue Asp89 is modified to 3-methylthioaspartic acid.

Belongs to the universal ribosomal protein uS12 family. In terms of assembly, part of the 30S ribosomal subunit. Contacts proteins S8 and S17. May interact with IF1 in the 30S initiation complex.

With S4 and S5 plays an important role in translational accuracy. Functionally, interacts with and stabilizes bases of the 16S rRNA that are involved in tRNA selection in the A site and with the mRNA backbone. Located at the interface of the 30S and 50S subunits, it traverses the body of the 30S subunit contacting proteins on the other side and probably holding the rRNA structure together. The combined cluster of proteins S8, S12 and S17 appears to hold together the shoulder and platform of the 30S subunit. This Aeromonas hydrophila subsp. hydrophila (strain ATCC 7966 / DSM 30187 / BCRC 13018 / CCUG 14551 / JCM 1027 / KCTC 2358 / NCIMB 9240 / NCTC 8049) protein is Small ribosomal subunit protein uS12.